A 184-amino-acid chain; its full sequence is Large ribosomal subunit protein uL6 (184 aa).

The protein belongs to the universal ribosomal protein uL6 family. In terms of assembly, part of the 50S ribosomal subunit.

In terms of biological role, this protein binds to the 23S rRNA, and is important in its secondary structure. It is located near the subunit interface in the base of the L7/L12 stalk, and near the tRNA binding site of the peptidyltransferase center. The protein is Large ribosomal subunit protein uL6 of Fervidobacterium nodosum (strain ATCC 35602 / DSM 5306 / Rt17-B1).